A 98-amino-acid polypeptide reads, in one-letter code: Serine rich endogenous peptide 10 (98 aa).

The signal sequence occupies residues 1 to 29; it reads MERKKFSSKFIHLLIVFLLLCTFLSRTES. A disordered region spans residues 50-98; it reads NSAIGTPSSTSDHAPGSNGRKLMSIYRPNGDIFTGPSGSGHGGGRTPAP. Positions 52 to 61 are enriched in polar residues; that stretch reads AIGTPSSTSD. 2 short sequence motifs (SCOOP motif) span residues 52 to 66 and 80 to 94; these read AIGT…APGS and DIFT…GGGR. Short sequence motifs (sxS motif essential for MIK2 binding) lie at residues 58–60 and 86–88; these read STS and SGS. Over residues 86-98 the composition is skewed to gly residues; it reads SGSGHGGGRTPAP.

Belongs to the serine rich endogenous peptide (SCOOP) phytocytokine family. In terms of assembly, interacts with MIK2 (via extracellular leucine-rich repeat domain); this interaction triggers the formation of complex between MIK2 and the BAK1/SERK3 and SERK4 coreceptors, and subsequent BAK1 activation by phosphorylation. As to expression, mostly expressed in leaves and seedlings shoots, to a lower extent, in roots, but barely in flowers.

It is found in the cell membrane. The protein localises to the secreted. Its subcellular location is the extracellular space. The protein resides in the apoplast. Functionally, brassicaceae-specific phytocytokine (plant endogenous peptide released into the apoplast) perceived by MIK2 in a BAK1/SERK3 and SERK4 coreceptors-dependent manner, that modulates various physiological and antimicrobial processes including growth prevention and reactive oxygen species (ROS) response regulation. Inhibits root growth and regulates root meristems. Promotes ROS production and MAPK (e.g. MPK3, MPK4 and MPK6) activation in a MIK2-dependent manner, thus leading to the up-regulation of immune-related marker genes (e.g. WRKY30, WRKY33 and CYP81F2). This Arabidopsis thaliana (Mouse-ear cress) protein is Serine rich endogenous peptide 10.